We begin with the raw amino-acid sequence, 1696 residues long: MQEFGFMCKEREMETVRGVLPYWPRIYCKISLDLDRRVREATQQAFEQLILKVKKYLAPHLKSLMGFWLIAQCDTYSPAASSARVAFEAAFPAHKQPEALAFCKEEIMNVLLDHLLKETPDTLSDTQAVPIEDRESKYFRVVTCSLLALKRLLCMLPRSENSSLQERLAHLLSQSKFWKYSKHSTSSIRSAFFELMSALCQCSPDVLRAEASRLCPAVLLSIDDSDAVVCPALWEAVLYTITTIEDCWEHVNAQKGVLPKLWSVLREGGRGLATVIFPNLLPFISRVPTNIIKTPTDFYSNFFNSLGQGLSSERAVASPAECSAIISAYMECLRFAMQENAGEEEENKKVQQILISDQLMPLIDSSLKDPKLQNSPLFSQVEETLYSWEKKAESQGLDDKLSRIHATLLREFWENLAHICVSHVDVIEAGEKNLAGVSGLLQVLQNPNCLLKVNKKKKAKIRFKGEGDDESDAVSHVSESQPMSKFIMETCSSSGRDPGIAQLRQERLEDLVCKLAELSMVYISEQRSQQHLMFLAALLSTFPSIRVFQVLLQQSSEEDPKNLNSPDHDVTPRHKNPAVQFLYAKLIFWFNDKSLEESDFLVDILYSVLFCCTDSSERKHLLDDMTKMNFKWSVFLYIIQKACTDPEKYSLASDWLKGEVLGERLICLANDLCTSGLMDKATPSEAYCSKKWALLSLVLSEHVHNEYLIADAYVEKIINKLHSALMKARNLSKAGHLEQSVSFICDVGSNFFSSIKGCLQMPSAEDLLLTIFQLCAQASDTSHMSESLLLKLKNTWLAGLHSLVCQYKNMPQGSNFLKQSAQWVKDQIQTSHLNVKSLQSLICTVDDLYSTILDSSLSGFSLLAEHTASMMPSAETWQKMRHALSSQWLSKPLLEGRLSMNTETSGTDLKSFPKTWLPSHLCTASLLSKMALRLLEKEKSLKEEEIGVKINITVAEMLYSLQWCEELEKPPTLIGECCEMLCSLGVSHEKVMDLSVHLPGLLELLYNRSKEDGSLWSLTANRFIHKRGAGPSELLPLTEDTEKYFPVTLGSLHTIQSLSAFLCPELKEELVIQCTARLMTCSASAVSCTDGGFGYLAIINSCLGSDSDLCQEILPGVLKVMLSWKDDQEDIFLFSSNVQDSSQSLIGLNVEMIRFLSILLKYLASSVSSLVDVDWDFIMCSMLAWLESACESSAAYHIPLVRLFACASCDLATEISHYFESVATSTTMSLPANLMSEWKEFFSEGIYSLMLPMLVRIAEEYKASETSHMSHVLKSLGRTLGYISKEQLLNHKLPAKFVAGQKTNLTDSLQSLLNTLAPLLLYRERSVQITVYHLLDKIMADLPGFDDEDLKSYGDEDEEPALSPPAALMSVLAIQEDLVESILKEIPVGEFAVIEPLKEEFCFVLGYLLTWKLILTFFKAASSQLRALYSQYLRKTKSLNKLLYNLFKLMPHNPVLPGQASDMPSKEPKTFFTEELQLAVKGTATVQQEVPHLACCVYHMTLKDLPAMVRLWWNGCEKRIFNVVDRFTTKYVSSVLSSQEISSVQLSTQVFDGMTVKARSTTREVIATYSVDDICIELIIQLPQNYPLGSITVESGRRVGVAVQQWRNWMLQLNTYLTHQNGSIMEGLALWKNNVDKRFEGVEDCMICFSVIHGSNYSLPKKACRTCKKKFHSECLYKWFTSSNKSTCPLCRETFF.

17 HEAT repeats span residues 17-55 (RGVL…KVKK), 102-140 (FCKE…KYFR), 144-181 (CSLL…WKYS), 209-250 (AEAS…CWEH), 252-289 (NAQK…RVPT), 354-394 (LISD…KAES), 431-468 (EKNL…GEGD), 542-580 (FPSI…PAVQ), 596-634 (EESD…KWSV), 921-958 (LCTA…AEML), 992-1029 (MDLS…KRGA), 1108-1148 (DLCQ…LIGL), 1150-1188 (VEMI…WLES), 1245-1282 (GIYS…TLGY), 1307-1344 (DSLQ…DLPG), 1371-1405 (VLAI…CFVL), and 1406-1442 (GYLL…LNKL). The RING-type zinc-finger motif lies at 1645-1692 (CMICFSVIHGSNYSLPKKACRTCKKKFHSECLYKWFTSSNKSTCPLCR).

It belongs to the LTN1 family. As to quaternary structure, component of the ribosome quality control complex (RQC), composed of at least the E3 ubiquitin ligase LTN1 and NEMF associated with the 60S ribosomal subunit. The complex probably also contains TCF25 as well as VCP/p97 and its ubiquitin-binding cofactors.

It localises to the cytoplasm. Its subcellular location is the cytosol. The enzyme catalyses S-ubiquitinyl-[E2 ubiquitin-conjugating enzyme]-L-cysteine + [acceptor protein]-L-lysine = [E2 ubiquitin-conjugating enzyme]-L-cysteine + N(6)-ubiquitinyl-[acceptor protein]-L-lysine.. Its pathway is protein modification; protein ubiquitination. Its function is as follows. E3 ubiquitin-protein ligase component of the ribosome quality control complex (RQC), a ribosome-associated complex that mediates ubiquitination and extraction of incompletely synthesized nascent chains for proteasomal degradation. Within the RQC complex, LTN1 is recruited to stalled 60S ribosomal subunits by NEMF and mediates ubiquitination of stalled nascent chains. Ubiquitination leads to VCP/p97 recruitment for extraction and degradation of the incomplete translation product. The sequence is that of E3 ubiquitin-protein ligase listerin (ltn1) from Xenopus tropicalis (Western clawed frog).